Here is a 209-residue protein sequence, read N- to C-terminus: Superoxide dismutase [Mn/Fe] (209 aa).

The Fe(3+) site is built by His38, His90, Asp172, and His176. His38, His90, Asp172, and His176 together coordinate Mn(2+).

This sequence belongs to the iron/manganese superoxide dismutase family. It depends on Mn(2+) as a cofactor. Requires Fe(3+) as cofactor.

It catalyses the reaction 2 superoxide + 2 H(+) = H2O2 + O2. Its function is as follows. Destroys superoxide anion radicals which are normally produced within the cells and which are toxic to biological systems. Catalyzes the dismutation of superoxide anion radicals into O2 and H2O2 by successive reduction and oxidation of the transition metal ion at the active site. This Rickettsia typhi (strain ATCC VR-144 / Wilmington) protein is Superoxide dismutase [Mn/Fe] (sodB).